Here is a 273-residue protein sequence, read N- to C-terminus: Dermonecrotic toxin LarSicTox-alphaIB1b (273 aa).

Histidine 5 is an active-site residue. Positions 25 and 27 each coordinate Mg(2+). The active-site Nucleophile is histidine 41. Intrachain disulfides connect cysteine 45–cysteine 51 and cysteine 47–cysteine 190. Aspartate 85 is a Mg(2+) binding site. N-linked (GlcNAc...) asparagine glycosylation occurs at asparagine 250.

Belongs to the arthropod phospholipase D family. Class II subfamily. Requires Mg(2+) as cofactor. As to expression, expressed by the venom gland.

The protein localises to the secreted. The enzyme catalyses an N-(acyl)-sphingosylphosphocholine = an N-(acyl)-sphingosyl-1,3-cyclic phosphate + choline. The catalysed reaction is an N-(acyl)-sphingosylphosphoethanolamine = an N-(acyl)-sphingosyl-1,3-cyclic phosphate + ethanolamine. It carries out the reaction a 1-acyl-sn-glycero-3-phosphocholine = a 1-acyl-sn-glycero-2,3-cyclic phosphate + choline. It catalyses the reaction a 1-acyl-sn-glycero-3-phosphoethanolamine = a 1-acyl-sn-glycero-2,3-cyclic phosphate + ethanolamine. Functionally, dermonecrotic toxins cleave the phosphodiester linkage between the phosphate and headgroup of certain phospholipids (sphingolipid and lysolipid substrates), forming an alcohol (often choline) and a cyclic phosphate. This toxin acts on sphingomyelin (SM). It may also act on ceramide phosphoethanolamine (CPE), lysophosphatidylcholine (LPC) and lysophosphatidylethanolamine (LPE), but not on lysophosphatidylserine (LPS), and lysophosphatidylglycerol (LPG). It acts by transphosphatidylation, releasing exclusively cyclic phosphate products as second products. Induces dermonecrosis, hemolysis, increased vascular permeability, edema, inflammatory response, and platelet aggregation. The polypeptide is Dermonecrotic toxin LarSicTox-alphaIB1b (Loxosceles arizonica (Arizona brown spider)).